A 359-amino-acid chain; its full sequence is Phosphoserine aminotransferase (359 aa).

Arg-42 is an L-glutamate binding site. Residues 76–77 (AS), Trp-102, Thr-152, Asp-171, and Gln-194 contribute to the pyridoxal 5'-phosphate site. N6-(pyridoxal phosphate)lysine is present on Lys-195. 236–237 (NT) lines the pyridoxal 5'-phosphate pocket.

The protein belongs to the class-V pyridoxal-phosphate-dependent aminotransferase family. SerC subfamily. In terms of assembly, homodimer. The cofactor is pyridoxal 5'-phosphate.

The protein resides in the cytoplasm. The catalysed reaction is O-phospho-L-serine + 2-oxoglutarate = 3-phosphooxypyruvate + L-glutamate. It carries out the reaction 4-(phosphooxy)-L-threonine + 2-oxoglutarate = (R)-3-hydroxy-2-oxo-4-phosphooxybutanoate + L-glutamate. The protein operates within amino-acid biosynthesis; L-serine biosynthesis; L-serine from 3-phospho-D-glycerate: step 2/3. Its pathway is cofactor biosynthesis; pyridoxine 5'-phosphate biosynthesis; pyridoxine 5'-phosphate from D-erythrose 4-phosphate: step 3/5. In terms of biological role, catalyzes the reversible conversion of 3-phosphohydroxypyruvate to phosphoserine and of 3-hydroxy-2-oxo-4-phosphonooxybutanoate to phosphohydroxythreonine. The sequence is that of Phosphoserine aminotransferase from Vesicomyosocius okutanii subsp. Calyptogena okutanii (strain HA).